The primary structure comprises 733 residues: Catalase-peroxidase (733 aa).

Residues 96 to 219 constitute a cross-link (tryptophyl-tyrosyl-methioninium (Trp-Tyr) (with M-245)); the sequence is WHSAGTYRTG…LAAVQMGLIY (124 aa). His97 serves as the catalytic Proton acceptor. Positions 219–245 form a cross-link, tryptophyl-tyrosyl-methioninium (Tyr-Met) (with W-96); the sequence is YVNPEGPNGNPDPLAAAKDIRETFARM. His260 contributes to the heme b binding site.

This sequence belongs to the peroxidase family. Peroxidase/catalase subfamily. In terms of assembly, homodimer or homotetramer. The cofactor is heme b. In terms of processing, formation of the three residue Trp-Tyr-Met cross-link is important for the catalase, but not the peroxidase activity of the enzyme.

The catalysed reaction is H2O2 + AH2 = A + 2 H2O. It catalyses the reaction 2 H2O2 = O2 + 2 H2O. Its function is as follows. Bifunctional enzyme with both catalase and broad-spectrum peroxidase activity. This chain is Catalase-peroxidase, found in Geobacter sp. (strain M21).